Consider the following 428-residue polypeptide: MIKILDSKNKNFDKTLDALLSKRKNKVQLNSVSVIKIIKDVKKNGDKAILKYEKRFNKNSIIAPSIKQINRAIQSLDQKVKKAIDLAYDRIYKFHSLQKFKNISYTDKLKNKLEYKYVPIESVAIYVPGSTASYPSSVLMNAVPAIVAGVKRLVMVNPGQKGKQNPAVLYAAKKCKIKEIYSIGGPSAIAAVAYGTKKIKKVDKIIGPGNSYVAAAKKEVFGDVGIEGMIAGPSEVTIVCDKFSNPEWIASDLIGQAEHDNLAQCILISKDKSIIKKVNYEIINQLKELPRAVIAKNSLLNNGILIYMPSDQKIINTVNKIAPEHLELNTKNYKKVVSKIKNAGSICLGKYAVMAMTDYNVGSNHVLPTNSSARYSSGVSVNEFYKRISYINLSKKGIETLGPSVITLANYEGLVGHAKSVEKRIRRK.

3 residues coordinate substrate: Ser-234, Gln-256, and His-259. Zn(2+) contacts are provided by Gln-256 and His-259. Active-site proton acceptor residues include Glu-324 and His-325. Residues His-325, Asp-358, Glu-412, and His-417 each contribute to the substrate site. Residue Asp-358 coordinates Zn(2+). His-417 serves as a coordination point for Zn(2+).

It belongs to the histidinol dehydrogenase family. The cofactor is Zn(2+).

It catalyses the reaction L-histidinol + 2 NAD(+) + H2O = L-histidine + 2 NADH + 3 H(+). It functions in the pathway amino-acid biosynthesis; L-histidine biosynthesis; L-histidine from 5-phospho-alpha-D-ribose 1-diphosphate: step 9/9. Catalyzes the sequential NAD-dependent oxidations of L-histidinol to L-histidinaldehyde and then to L-histidine. In Pelagibacter ubique (strain HTCC1062), this protein is Histidinol dehydrogenase.